The chain runs to 274 residues: Kit ligand (274 aa).

An N-terminal signal peptide occupies residues 1-25; the sequence is MKKTQTWIITCIYLQLLLFNPLVKT. Over 26–215 the chain is Extracellular; the sequence is KGICENRVTD…SNFTGDSNLQ (190 aa). 2 cysteine pairs are disulfide-bonded: C29-C114 and C68-C164. Residues N90, N97, N145, N196, and N207 are each glycosylated (N-linked (GlcNAc...) asparagine). A helical membrane pass occupies residues 216 to 238; that stretch reads WAAMALPAFFSLVIGFAFGALYW. Residues 239–274 are Cytoplasmic-facing; that stretch reads KKKQPNLTRAVENIQINEEDNEISMLQEKEREFQEV.

It belongs to the SCF family. In terms of assembly, homodimer, non-covalently linked. A soluble form is produced by proteolytic processing of the extracellular domain.

It is found in the cytoplasm. It localises to the cytoskeleton. Its subcellular location is the cell membrane. The protein resides in the cell projection. The protein localises to the lamellipodium. It is found in the filopodium. It localises to the secreted. Functionally, stimulates the proliferation of mast cells. Able to augment the proliferation of both myeloid and lymphoid hematopoietic progenitors in bone marrow culture. Also mediates cell-cell adhesion. Acts synergistically with other cytokines, probably interleukins. The protein is Kit ligand (KITLG) of Equus caballus (Horse).